A 3164-amino-acid polypeptide reads, in one-letter code: Protein eyes shut homolog (3164 aa).

Positions 1–21 are cleaved as a signal peptide; that stretch reads MTDKSIIILSLMVFHSSFING. Asn-42, Asn-105, Asn-117, and Asn-166 each carry an N-linked (GlcNAc...) asparagine glycan. EGF-like domains are found at residues 170 to 212, 213 to 254, and 256 to 292; these read KQQF…KYCQ, ELDA…KNCS, and IIGQ…PFCE. Cystine bridges form between Cys-174/Cys-189, Cys-183/Cys-200, Cys-202/Cys-211, Cys-217/Cys-228, Cys-222/Cys-242, Cys-244/Cys-253, Cys-260/Cys-270, Cys-265/Cys-280, and Cys-282/Cys-291. 4 N-linked (GlcNAc...) asparagine glycosylation sites follow: Asn-225, Asn-252, Asn-269, and Asn-272. N-linked (GlcNAc...) asparagine glycosylation is found at Asn-311 and Asn-343. EGF-like domains follow at residues 332 to 368 and 370 to 406; these read DVSE…LLCK and IQTS…KNCE. 5 disulfide bridges follow: Cys-336/Cys-347, Cys-341/Cys-356, Cys-358/Cys-367, Cys-374/Cys-385, and Cys-396/Cys-405. Asn-382 carries an N-linked (GlcNAc...) asparagine glycan. 3 N-linked (GlcNAc...) asparagine glycosylation sites follow: Asn-506, Asn-521, and Asn-566. In terms of domain architecture, EGF-like 6 spans 567–602; the sequence is TTDDQENECQHEAICKDEINRPRCSCSLSYIGRLCV. Intrachain disulfides connect Cys-575–Cys-590 and Cys-592–Cys-601. N-linked (GlcNAc...) asparagine glycans are attached at residues Asn-611 and Asn-654. An EGF-like 7 domain is found at 643–679; the sequence is DTEDCKSVSCKNGTTSIHLRGYFFCKCVPGFKGTQRE. 6 cysteine pairs are disulfide-bonded: Cys-652/Cys-667, Cys-685/Cys-696, Cys-690/Cys-705, Cys-707/Cys-719, Cys-737/Cys-748, and Cys-742/Cys-757. An EGF-like 8; calcium-binding domain is found at 681 to 720; it reads DIDECASHPCKNGATCIDQPGNYFCQCVPPFKVVDGFSCL. The region spanning 733–769 is the EGF-like 9; calcium-binding domain; the sequence is DIDDCILNACEHNSTCKDLHLSYQCVCLSGWEGNFSE. 5 N-linked (GlcNAc...) asparagine glycosylation sites follow: Asn-745, Asn-766, Asn-782, Asn-783, and Asn-805. In terms of domain architecture, EGF-like 10; calcium-binding spans 771-807; sequence ESNECKMNPCKNNSTCIDLYKSYRCECTSGWTGQNCS. Intrachain disulfides connect Cys-775–Cys-786, Cys-780–Cys-795, Cys-797–Cys-806, Cys-813–Cys-824, Cys-818–Cys-835, Cys-837–Cys-846, Cys-853–Cys-866, Cys-860–Cys-876, Cys-878–Cys-887, Cys-894–Cys-905, Cys-899–Cys-914, Cys-916–Cys-925, Cys-932–Cys-943, Cys-937–Cys-952, Cys-954–Cys-963, Cys-970–Cys-981, Cys-975–Cys-990, Cys-992–Cys-1001, Cys-1008–Cys-1019, Cys-1013–Cys-1028, Cys-1030–Cys-1039, Cys-1046–Cys-1056, Cys-1051–Cys-1065, Cys-1067–Cys-1076, Cys-1083–Cys-1094, Cys-1088–Cys-1103, Cys-1105–Cys-1114, Cys-1121–Cys-1137, Cys-1131–Cys-1147, Cys-1149–Cys-1158, Cys-1165–Cys-1176, Cys-1170–Cys-1185, and Cys-1187–Cys-1196. EGF-like domains follow at residues 809-847, 849-888, and 890-926; these read EINE…RFCH, RYNP…KNCE, and DVKE…SLCE. Asn-862 and Asn-863 each carry an N-linked (GlcNAc...) asparagine glycan. Residues 928 to 964 form the EGF-like 14; calcium-binding domain; sequence EINECSSEPCKNNGTCVDLTNRFFCNCEPGYHGPFCE. Asn-940 carries an N-linked (GlcNAc...) asparagine glycan. Positions 966-1002 constitute an EGF-like 15 domain; the sequence is DVNKCKISPCLDEENCVYRTDGYNCLCAPGYTGINCE. Residues 1004-1040 enclose the EGF-like 16; calcium-binding domain; the sequence is NLDECLSEPCLHDGVCIDGINHYTCDCKSGFFGTHCE. EGF-like domains are found at residues 1042–1077, 1079–1115, and 1117–1159; these read NAND…TQCK, KIND…AYCE, and SIDN…QFCE. In terms of domain architecture, EGF-like 20; calcium-binding spans 1161–1197; it reads NINECSSSPCLHGADCEDHINGYVCKCQPGWSGHHCE. N-linked (GlcNAc...) asparagine glycans are attached at residues Asn-1509, Asn-1522, Asn-1906, Asn-1941, Asn-1960, and Asn-2033. The 181-residue stretch at 1883–2063 folds into the Laminin G-like 1 domain; that stretch reads FSCVRYYGDS…AVKNYHINNC (181 aa). Intrachain disulfides connect Cys-2037-Cys-2063, Cys-2103-Cys-2114, Cys-2108-Cys-2128, and Cys-2130-Cys-2139. One can recognise an EGF-like 21 domain in the interval 2099–2140; that stretch reads APSVCQQDVCHNGGTCHPIFLSRGIVSFQCDCPLHFTGRFCE. Residues 2145–2339 enclose the Laminin G-like 2 domain; the sequence is LFFPSFNGNS…NIENCHVPWC (195 aa). N-linked (GlcNAc...) asparagine glycans are attached at residues Asn-2170, Asn-2185, and Asn-2228. Cystine bridges form between Cys-2308/Cys-2339, Cys-2339/Cys-2350, Cys-2344/Cys-2359, Cys-2375/Cys-2386, Cys-2380/Cys-2396, and Cys-2398/Cys-2407. EGF-like domains are found at residues 2335–2368 and 2371–2408; these read HVPW…YSGK and QFAS…PLCT. Asn-2347 carries N-linked (GlcNAc...) asparagine glycosylation. N-linked (GlcNAc...) asparagine glycans are attached at residues Asn-2412, Asn-2453, Asn-2484, Asn-2506, and Asn-2532. A Laminin G-like 3 domain is found at 2419 to 2609; sequence SGTDAFGYTS…PNAGRSVGQC (191 aa). Disulfide bonds link Cys-2576-Cys-2609, Cys-2614-Cys-2625, and Cys-2619-Cys-2634. EGF-like domains are found at residues 2610-2646 and 2648-2689; these read HASP…AFCT and TVST…IYCE. A glycan (N-linked (GlcNAc...) asparagine) is linked at Asn-2635. Intrachain disulfides connect Cys-2636/Cys-2645, Cys-2652/Cys-2668, Cys-2662/Cys-2677, and Cys-2679/Cys-2688. In terms of domain architecture, Laminin G-like 4 spans 2717–2895; that stretch reads DPSFRSNELS…AKGGSNVGDC (179 aa). N-linked (GlcNAc...) asparagine glycans are attached at residues Asn-2775, Asn-2800, and Asn-2824. 4 cysteine pairs are disulfide-bonded: Cys-2868-Cys-2895, Cys-2900-Cys-2911, Cys-2905-Cys-2920, and Cys-2922-Cys-2931. 2 EGF-like domains span residues 2896–2932 and 2933–2970; these read DGTA…NTCN and QSVY…RYCE. A glycan (N-linked (GlcNAc...) asparagine) is linked at Asn-2914. A glycan (N-linked (GlcNAc...) asparagine) is linked at Asn-2932. 3 cysteine pairs are disulfide-bonded: Cys-2937–Cys-2948, Cys-2942–Cys-2958, and Cys-2960–Cys-2969. Residue Asn-2951 is glycosylated (N-linked (GlcNAc...) asparagine). N-linked (GlcNAc...) asparagine glycans are attached at residues Asn-2971, Asn-3006, Asn-3036, Asn-3057, Asn-3073, and Asn-3082. Residues 2975-3164 form the Laminin G-like 5 domain; that stretch reads FSTAKFMGNS…YDGDEQNEVT (190 aa).

Belongs to the EYS family.

The protein resides in the cell projection. It localises to the cilium. It is found in the photoreceptor outer segment. The protein localises to the cytoplasm. Its subcellular location is the cytoskeleton. The protein resides in the cilium axoneme. It localises to the microtubule organizing center. It is found in the centrosome. The protein localises to the secreted. Its subcellular location is the extracellular space. The protein resides in the extracellular matrix. It localises to the interphotoreceptor matrix. Required to maintain the integrity of photoreceptor cells. Specifically required for normal morphology of the photoreceptor ciliary pocket, and might thus facilitate protein trafficking between the photoreceptor inner and outer segments via the transition zone. In Pongo abelii (Sumatran orangutan), this protein is Protein eyes shut homolog (EYS).